Reading from the N-terminus, the 94-residue chain is DNA-directed RNA polymerase subunit omega (94 aa).

The protein belongs to the RNA polymerase subunit omega family. The RNAP catalytic core consists of 2 alpha, 1 beta, 1 beta' and 1 omega subunit. When a sigma factor is associated with the core the holoenzyme is formed, which can initiate transcription.

It carries out the reaction RNA(n) + a ribonucleoside 5'-triphosphate = RNA(n+1) + diphosphate. In terms of biological role, promotes RNA polymerase assembly. Latches the N- and C-terminal regions of the beta' subunit thereby facilitating its interaction with the beta and alpha subunits. This is DNA-directed RNA polymerase subunit omega from Frankia alni (strain DSM 45986 / CECT 9034 / ACN14a).